A 354-amino-acid polypeptide reads, in one-letter code: Ferrochelatase (354 aa).

2 residues coordinate Fe cation: His204 and Glu306.

This sequence belongs to the ferrochelatase family.

It is found in the cytoplasm. It catalyses the reaction heme b + 2 H(+) = protoporphyrin IX + Fe(2+). The protein operates within porphyrin-containing compound metabolism; protoheme biosynthesis; protoheme from protoporphyrin-IX: step 1/1. In terms of biological role, catalyzes the ferrous insertion into protoporphyrin IX. The protein is Ferrochelatase of Coxiella burnetii (strain CbuG_Q212) (Coxiella burnetii (strain Q212)).